Reading from the N-terminus, the 238-residue chain is SPEG neighbor protein (238 aa).

The region spanning 29–55 (QSAAIRIQASYRGHRSRKELREKGPPR) is the IQ domain. 2 consecutive Ig-like domains span residues 54-143 (PRVL…ARIL) and 147-236 (PTKI…ARVD).

This chain is SPEG neighbor protein, found in Homo sapiens (Human).